Reading from the N-terminus, the 306-residue chain is Ornithine carbamoyltransferase (306 aa).

Carbamoyl phosphate is bound by residues 46–49 (STRT), Gln73, Arg97, and 124–127 (HPTQ). L-ornithine is bound by residues Asn156, Asp220, and 224-225 (SM). Residues 260–261 (CL) and Arg288 contribute to the carbamoyl phosphate site.

Belongs to the aspartate/ornithine carbamoyltransferase superfamily. OTCase family.

The protein localises to the cytoplasm. It catalyses the reaction carbamoyl phosphate + L-ornithine = L-citrulline + phosphate + H(+). It participates in amino-acid biosynthesis; L-arginine biosynthesis; L-arginine from L-ornithine and carbamoyl phosphate: step 1/3. Reversibly catalyzes the transfer of the carbamoyl group from carbamoyl phosphate (CP) to the N(epsilon) atom of ornithine (ORN) to produce L-citrulline. The polypeptide is Ornithine carbamoyltransferase (Campylobacter jejuni subsp. jejuni serotype O:23/36 (strain 81-176)).